The following is a 250-amino-acid chain: DNA repair protein RecO (250 aa).

This sequence belongs to the RecO family.

Involved in DNA repair and RecF pathway recombination. This is DNA repair protein RecO from Granulibacter bethesdensis (strain ATCC BAA-1260 / CGDNIH1).